Consider the following 116-residue polypeptide: Cell division protein FtsL (116 aa).

Residues 1-24 lie on the Cytoplasmic side of the membrane; that stretch reads MMLTNRQIRVRLFESLKNSFFKKT. The chain crosses the membrane as a helical span at residues 25-45; that stretch reads VGISFALLFILLITAFSLIVV. Topologically, residues 46 to 116 are periplasmic; sequence RFEYKLQLNE…NEQKEELNNE (71 aa).

The protein belongs to the FtsL family. As to quaternary structure, part of a complex composed of FtsB, FtsL and FtsQ.

The protein resides in the cell inner membrane. Its function is as follows. Essential cell division protein. May link together the upstream cell division proteins, which are predominantly cytoplasmic, with the downstream cell division proteins, which are predominantly periplasmic. This Francisella tularensis subsp. tularensis (strain SCHU S4 / Schu 4) protein is Cell division protein FtsL.